A 119-amino-acid polypeptide reads, in one-letter code: UPF0102 protein Nmul_A0195 (119 aa).

The protein belongs to the UPF0102 family.

In Nitrosospira multiformis (strain ATCC 25196 / NCIMB 11849 / C 71), this protein is UPF0102 protein Nmul_A0195.